The sequence spans 445 residues: GTPase Der (445 aa).

EngA-type G domains lie at Pro3–Gln167 and Val180–Met353. Residues Gly9 to Ser16, Asp56 to Phe60, Asn119 to Glu122, Gly186 to Ser193, Asp233 to Leu237, and Asn298 to Asp301 each bind GTP. The region spanning Ala354–Thr438 is the KH-like domain.

This sequence belongs to the TRAFAC class TrmE-Era-EngA-EngB-Septin-like GTPase superfamily. EngA (Der) GTPase family. Associates with the 50S ribosomal subunit.

GTPase that plays an essential role in the late steps of ribosome biogenesis. The chain is GTPase Der from Paraburkholderia phytofirmans (strain DSM 17436 / LMG 22146 / PsJN) (Burkholderia phytofirmans).